A 268-amino-acid polypeptide reads, in one-letter code: WUSCHEL-related homeobox 12 (268 aa).

The span at Met-1 to Glu-16 shows a compositional bias: polar residues. Disordered regions lie at residues Met-1–Trp-22 and Ser-173–Asn-198. The homeobox; WUS-type DNA-binding region spans Pro-17–His-81.

The protein belongs to the WUS homeobox family.

Its subcellular location is the nucleus. Its function is as follows. Transcription factor which may be involved in developmental processes. The sequence is that of WUSCHEL-related homeobox 12 (WOX12) from Arabidopsis thaliana (Mouse-ear cress).